Reading from the N-terminus, the 683-residue chain is Protein kinase C eta type (683 aa).

Residues 1 to 118 (MSSGTMKFNG…LRTTGASDTF (118 aa)) form the C2 domain. Residues Ser28 and Ser32 each carry the phosphoserine; by autocatalysis modification. Phorbol-ester/DAG-type zinc fingers lie at residues 171–222 (GHKF…VTAC) and 245–295 (PHKF…APNC). Ser317 is modified (phosphoserine). The segment at 320 to 342 (SKLVSRSTLRRQGKESSKEGNGI) is disordered. Residues 355-614 (FEFIRVLGKG…EHAILRHPFF (260 aa)) enclose the Protein kinase domain. Residues 361-369 (LGKGSFGKV) and Lys384 each bind ATP. Asp479 functions as the Proton acceptor in the catalytic mechanism. Thr513 is modified (phosphothreonine; by PDPK1). Residues 615 to 683 (KEIDWAQLNH…FSYVSPELQP (69 aa)) form the AGC-kinase C-terminal domain. The residue at position 656 (Thr656) is a Phosphothreonine. The residue at position 675 (Ser675) is a Phosphoserine.

The protein belongs to the protein kinase superfamily. AGC Ser/Thr protein kinase family. PKC subfamily. Interacts with FYN. Interacts with RALA. Interacts with DGKQ. Interacts with PRKCH upstream open reading frame 2; the interaction leads to inhibition of kinase activity. As to expression, most abundant in lung, less in heart and skin.

It is found in the cytoplasm. It catalyses the reaction L-seryl-[protein] + ATP = O-phospho-L-seryl-[protein] + ADP + H(+). The catalysed reaction is L-threonyl-[protein] + ATP = O-phospho-L-threonyl-[protein] + ADP + H(+). Its activity is regulated as follows. Novel PKCs (PRKCD, PRKCE, PRKCH and PRKCQ) are calcium-insensitive, but activated by diacylglycerol (DAG) and phosphatidylserine. Three specific sites; Thr-513 (activation loop of the kinase domain), Thr-656 (turn motif) and Ser-675 (hydrophobic region), need to be phosphorylated for its full activation. Inhibited by PRKCH upstream open reading frame 2. Functionally, calcium-independent, phospholipid- and diacylglycerol (DAG)-dependent serine/threonine-protein kinase that is involved in the regulation of cell differentiation in keratinocytes and pre-B cell receptor, mediates regulation of epithelial tight junction integrity and foam cell formation, and is required for glioblastoma proliferation and apoptosis prevention in MCF-7 cells. In keratinocytes, binds and activates the tyrosine kinase FYN, which in turn blocks epidermal growth factor receptor (EGFR) signaling and leads to keratinocyte growth arrest and differentiation. Associates with the cyclin CCNE1-CDK2-CDKN1B complex and inhibits CDK2 kinase activity, leading to RB1 dephosphorylation and thereby G1 arrest in keratinocytes. In association with RALA activates actin depolymerization, which is necessary for keratinocyte differentiation. In the pre-B cell receptor signaling, functions downstream of BLNK by up-regulating IRF4, which in turn activates L chain gene rearrangement. Regulates epithelial tight junctions (TJs) by phosphorylating occludin (OCLN) on threonine residues, which is necessary for the assembly and maintenance of TJs. In association with PLD2 and via TLR4 signaling, is involved in lipopolysaccharide (LPS)-induced RGS2 down-regulation and foam cell formation. Upon PMA stimulation, mediates glioblastoma cell proliferation by activating the mTOR pathway, the PI3K/AKT pathway and the ERK1-dependent phosphorylation of ELK1. Involved in the protection of glioblastoma cells from irradiation-induced apoptosis by preventing caspase-9 activation. In camptothecin-treated MCF-7 cells, regulates NF-kappa-B upstream signaling by activating IKBKB, and confers protection against DNA damage-induced apoptosis. Promotes oncogenic functions of ATF2 in the nucleus while blocking its apoptotic function at mitochondria. Phosphorylates ATF2 which promotes its nuclear retention and transcriptional activity and negatively regulates its mitochondrial localization. This is Protein kinase C eta type (PRKCH) from Homo sapiens (Human).